A 138-amino-acid polypeptide reads, in one-letter code: uncharacterized protein (138 aa).

The next 2 helical transmembrane spans lie at T21 to A43 and S48 to I65.

Its subcellular location is the cell membrane. This is an uncharacterized protein from Archaeoglobus fulgidus (strain ATCC 49558 / DSM 4304 / JCM 9628 / NBRC 100126 / VC-16).